Reading from the N-terminus, the 72-residue chain is Translation initiation factor IF-1 (72 aa).

The S1-like domain maps to 1–72 (MAKEDVIEVE…NRGRIVYRYK (72 aa)).

It belongs to the IF-1 family. In terms of assembly, component of the 30S ribosomal translation pre-initiation complex which assembles on the 30S ribosome in the order IF-2 and IF-3, IF-1 and N-formylmethionyl-tRNA(fMet); mRNA recruitment can occur at any time during PIC assembly.

Its subcellular location is the cytoplasm. One of the essential components for the initiation of protein synthesis. Stabilizes the binding of IF-2 and IF-3 on the 30S subunit to which N-formylmethionyl-tRNA(fMet) subsequently binds. Helps modulate mRNA selection, yielding the 30S pre-initiation complex (PIC). Upon addition of the 50S ribosomal subunit IF-1, IF-2 and IF-3 are released leaving the mature 70S translation initiation complex. The chain is Translation initiation factor IF-1 from Moorella thermoacetica (strain ATCC 39073 / JCM 9320).